The primary structure comprises 182 residues: Ribosome maturation factor RimM (182 aa).

Positions 102 to 182 (EEGDYYWKDL…SIEVDWDPGF (81 aa)) constitute a PRC barrel domain.

Belongs to the RimM family. Binds ribosomal protein uS19.

The protein resides in the cytoplasm. Its function is as follows. An accessory protein needed during the final step in the assembly of 30S ribosomal subunit, possibly for assembly of the head region. Essential for efficient processing of 16S rRNA. May be needed both before and after RbfA during the maturation of 16S rRNA. It has affinity for free ribosomal 30S subunits but not for 70S ribosomes. This Escherichia fergusonii (strain ATCC 35469 / DSM 13698 / CCUG 18766 / IAM 14443 / JCM 21226 / LMG 7866 / NBRC 102419 / NCTC 12128 / CDC 0568-73) protein is Ribosome maturation factor RimM.